The chain runs to 445 residues: UPF0210 protein SUB1511 (445 aa).

Belongs to the UPF0210 family. Homodimer.

The sequence is that of UPF0210 protein SUB1511 from Streptococcus uberis (strain ATCC BAA-854 / 0140J).